We begin with the raw amino-acid sequence, 79 residues long: Short neurotoxin 3 (79 aa).

The first 21 residues, 1-21, serve as a signal peptide directing secretion; sequence MKTLLLTLVMVTIMCLDLGYT. 4 disulfide bridges follow: Cys24–Cys41, Cys34–Cys59, Cys63–Cys71, and Cys72–Cys77.

Belongs to the three-finger toxin family. Short-chain subfamily. Type III alpha-neurotoxin sub-subfamily. Expressed by the venom gland.

It localises to the secreted. Binds with high affinity to muscle nicotinic acetylcholine receptor (nAChR) and hinders acetylcholine binding to the receptor, thereby impairing neuromuscular transmission. Competes with the binding of alpha-bungarotoxin on muscle AChR (from Torpedo) with an IC(50) of 0.30 uM. Causes muscle paralysis, spasms and increased respiration. In Pseudonaja textilis (Eastern brown snake), this protein is Short neurotoxin 3.